We begin with the raw amino-acid sequence, 140 residues long: MAKKITAKVKLQLPAGSANPSPPVGPALGQHGVNIMEFCKAFNAKTMEQKGTIIPALITIYADRSFTFITKTPPASVLLVKAAKIDKGSGEPNKNKVGKVTAAQIEEIAKLKMVDMTAKDLEAACRTISGTARSMGIEIV.

Belongs to the universal ribosomal protein uL11 family. In terms of assembly, part of the ribosomal stalk of the 50S ribosomal subunit. Interacts with L10 and the large rRNA to form the base of the stalk. L10 forms an elongated spine to which L12 dimers bind in a sequential fashion forming a multimeric L10(L12)X complex. Post-translationally, one or more lysine residues are methylated.

In terms of biological role, forms part of the ribosomal stalk which helps the ribosome interact with GTP-bound translation factors. This chain is Large ribosomal subunit protein uL11, found in Solidesulfovibrio magneticus (strain ATCC 700980 / DSM 13731 / RS-1) (Desulfovibrio magneticus).